Reading from the N-terminus, the 1268-residue chain is Vigilin (1268 aa).

The residue at position 2 (serine 2) is an N-acetylserine. At threonine 8 the chain carries Phosphothreonine. Phosphoserine occurs at positions 11, 31, and 35. 14 consecutive KH domains span residues 158–229, 230–302, 303–371, 372–442, 443–514, 515–588, 589–660, 661–734, 735–807, 808–880, 881–979, 980–1059, 1060–1134, and 1135–1209; these read PKEH…RLEV, EKAF…AVEV, KKSQ…SVAA, PSWL…EINI, DHKF…DLII, EQRF…SVPI, FKQF…EVSI, PAKL…DIRA, KPEY…SMLV, DPKH…ECAI, PQKF…EVEV, PFDL…SVTV, DPKY…DVPL, and DHRV…ALQV. A phosphothreonine mark is found at threonine 295 and threonine 296. Serine 317 carries the phosphoserine modification. Tyrosine 437 is subject to Phosphotyrosine. Serine 645 carries the phosphoserine modification. The tract at residues 910–947 is disordered; it reads PDREENPVHSTEPAVQENGDEAGEGREAKDSDPGSPRR. Residues 932–947 are compositionally biased toward basic and acidic residues; the sequence is GEGREAKDSDPGSPRR. Lysine 991 bears the N6-acetyllysine mark. Positions 1237–1249 are enriched in polar residues; sequence SSEKAPDMSSSEE. Residues 1237–1268 form a disordered region; sequence SSEKAPDMSSSEEFPSFGAQVAPKTLPWGPKR. 2 positions are modified to phosphoserine: serine 1247 and serine 1252.

It is found in the cytoplasm. Its subcellular location is the nucleus. Its function is as follows. Appears to play a role in cell sterol metabolism. It may function to protect cells from over-accumulation of cholesterol. This Pongo abelii (Sumatran orangutan) protein is Vigilin (HDLBP).